A 134-amino-acid chain; its full sequence is uncharacterized protein (134 aa).

Residues 10–70 (KETRQRIIDA…AVLASRQHPL (61 aa)) enclose the HTH tetR-type domain. The segment at residues 33 to 52 (TLDQIARKAGVTRGAVYWHF) is a DNA-binding region (H-T-H motif).

Unknown, does not seem to be involved in regulation of the ttgGHI or ttgVW operons. This is an uncharacterized protein from Pseudomonas putida (strain DOT-T1E).